Reading from the N-terminus, the 453-residue chain is Bifunctional protein GlmU (453 aa).

Residues 1–227 are pyrophosphorylase; sequence MTQLSVVILA…LMEVEGANNR (227 aa). UDP-N-acetyl-alpha-D-glucosamine contacts are provided by residues 9-12, lysine 23, glutamine 74, 79-80, 101-103, glycine 138, glutamate 152, asparagine 167, and asparagine 225; these read LAAG, GT, and YGD. Position 103 (aspartate 103) interacts with Mg(2+). Asparagine 225 is a binding site for Mg(2+). Residues 228-248 form a linker region; the sequence is LQLAALERYYQKIQAEKLLLA. The tract at residues 249–453 is N-acetyltransferase; sequence GVTIIDPARF…IQGWQRPTKK (205 aa). UDP-N-acetyl-alpha-D-glucosamine contacts are provided by arginine 331 and lysine 349. Histidine 361 serves as the catalytic Proton acceptor. UDP-N-acetyl-alpha-D-glucosamine contacts are provided by tyrosine 364 and asparagine 375. Acetyl-CoA is bound by residues alanine 378, 384 to 385, serine 403, alanine 421, and arginine 438; that span reads NY.

It in the N-terminal section; belongs to the N-acetylglucosamine-1-phosphate uridyltransferase family. This sequence in the C-terminal section; belongs to the transferase hexapeptide repeat family. As to quaternary structure, homotrimer. Mg(2+) is required as a cofactor.

Its subcellular location is the cytoplasm. The catalysed reaction is alpha-D-glucosamine 1-phosphate + acetyl-CoA = N-acetyl-alpha-D-glucosamine 1-phosphate + CoA + H(+). It carries out the reaction N-acetyl-alpha-D-glucosamine 1-phosphate + UTP + H(+) = UDP-N-acetyl-alpha-D-glucosamine + diphosphate. It functions in the pathway nucleotide-sugar biosynthesis; UDP-N-acetyl-alpha-D-glucosamine biosynthesis; N-acetyl-alpha-D-glucosamine 1-phosphate from alpha-D-glucosamine 6-phosphate (route II): step 2/2. Its pathway is nucleotide-sugar biosynthesis; UDP-N-acetyl-alpha-D-glucosamine biosynthesis; UDP-N-acetyl-alpha-D-glucosamine from N-acetyl-alpha-D-glucosamine 1-phosphate: step 1/1. The protein operates within bacterial outer membrane biogenesis; LPS lipid A biosynthesis. Its function is as follows. Catalyzes the last two sequential reactions in the de novo biosynthetic pathway for UDP-N-acetylglucosamine (UDP-GlcNAc). The C-terminal domain catalyzes the transfer of acetyl group from acetyl coenzyme A to glucosamine-1-phosphate (GlcN-1-P) to produce N-acetylglucosamine-1-phosphate (GlcNAc-1-P), which is converted into UDP-GlcNAc by the transfer of uridine 5-monophosphate (from uridine 5-triphosphate), a reaction catalyzed by the N-terminal domain. The sequence is that of Bifunctional protein GlmU from Glaesserella parasuis serovar 5 (strain SH0165) (Haemophilus parasuis).